A 109-amino-acid polypeptide reads, in one-letter code: A-type ATP synthase subunit F (109 aa).

It belongs to the V-ATPase F subunit family. As to quaternary structure, has multiple subunits with at least A(3), B(3), C, D, E, F, H, I and proteolipid K(x).

It is found in the cell membrane. Component of the A-type ATP synthase that produces ATP from ADP in the presence of a proton gradient across the membrane. In Haloquadratum walsbyi (strain DSM 16790 / HBSQ001), this protein is A-type ATP synthase subunit F.